The chain runs to 745 residues: Cellulose synthase-like protein E2 (745 aa).

Residues 1–14 (MAGSGGGVVSGGRQ) are compositionally biased toward gly residues. Residues 1–20 (MAGSGGGVVSGGRQRGPPLF) are disordered. 2 helical membrane passes run 29-49 (AMAAYRVSAATVFAGVLLIWL) and 66-86 (WAWLGMLAAELWFGFYWVLTL). Active-site residues include aspartate 155 and aspartate 458. A run of 5 helical transmembrane segments spans residues 541-561 (FPTLYYVTIPSLCFLNGISLF), 568-588 (WFIPFAYVMVAAYSCSLAESL), 658-678 (AMFVILTTVALLNLACMVLGI), 686-706 (GPGGLETLFLQAVLCVLIVAI), and 723-743 (LPASVARVSICFVLPLCILSI).

The protein belongs to the glycosyltransferase 2 family. Plant cellulose synthase-like E subfamily.

It is found in the golgi apparatus membrane. Functionally, thought to be a Golgi-localized beta-glycan synthase that polymerize the backbones of noncellulosic polysaccharides (hemicelluloses) of plant cell wall. This is Cellulose synthase-like protein E2 (CSLE2) from Oryza sativa subsp. japonica (Rice).